Here is a 1183-residue protein sequence, read N- to C-terminus: LRR receptor-like serine/threonine-protein kinase FLS2 (1183 aa).

The signal sequence occupies residues 1-41 (MERNKFASKMSQHYTKTICIAVVLVAVLFSLSSAAAAGSGA). The Extracellular segment spans residues 42–809 (AVSVQLEALL…GKKRVFSRTG (768 aa)). A disulfide bridge connects residues C87 and C94. Residues N88 and N120 are each glycosylated (N-linked (GlcNAc...) asparagine). LRR repeat units follow at residues 97–120 (AGQV…FLGN), 121–145 (ISTL…LGRL), 147–169 (ELEQ…LCNC), 171–193 (AMWA…IGDL), 194–217 (SNLE…MAKL), 218–241 (KGIM…IGDL), 242–265 (SNLQ…LGRC), 267–289 (NLTL…LGEL), 290–313 (TNLE…LRRC), 315–337 (SLLN…LGEL), 338–361 (PSLQ…LTNL), 363–385 (NLTI…IGSL), and 386–409 (RNLR…ISNC). A disulfide bridge links C167 with C189. N-linked (GlcNAc...) asparagine glycans are attached at residues N168 and N181. N267 carries N-linked (GlcNAc...) asparagine glycosylation. N363, N395, N408, and N414 each carry an N-linked (GlcNAc...) asparagine glycan. LRR repeat units lie at residues 433–457 (LQSL…LFDC), 459–480 (QLQK…LVGQ), 481–505 (LGNL…IGNM), 507–529 (KLIS…ISNM), 530–553 (SSLQ…VFEL), 555–577 (QLTI…VANL), 578–600 (RSLS…ALGR), 601–625 (LDQL…VIAS), 627–651 (SNVQ…IGGL), 652–675 (VMVQ…LAGC), 676–699 (KNLY…LFPQ), 701–724 (DLLT…IAAL), 725–748 (KHIQ…LANL), and 749–773 (TALR…VFRN). N483, N504, and N528 each carry an N-linked (GlcNAc...) asparagine glycan. N591 carries N-linked (GlcNAc...) asparagine glycosylation. N-linked (GlcNAc...) asparagine glycosylation occurs at N634. N-linked (GlcNAc...) asparagine glycosylation is found at N707, N747, N755, and N773. A helical transmembrane segment spans residues 810 to 830 (LVILVVLIALSTLLLLMVATI). Topologically, residues 831–1183 (LLVSYRRYRR…LKMSKLVGED (353 aa)) are cytoplasmic. Residues 876–1179 (FDQGNVIGSS…LSSLLKMSKL (304 aa)) form the Protein kinase domain. Residues 882-890 (IGSSNLSTV) and K908 contribute to the ATP site. The Proton acceptor role is filled by D1013.

Belongs to the protein kinase superfamily. Ser/Thr protein kinase family. In terms of assembly, interacts with SERK2.

The protein localises to the cell membrane. The enzyme catalyses L-seryl-[protein] + ATP = O-phospho-L-seryl-[protein] + ADP + H(+). It catalyses the reaction L-threonyl-[protein] + ATP = O-phospho-L-threonyl-[protein] + ADP + H(+). In terms of biological role, constitutes the pattern-recognition receptor (PPR) that determines the specific perception of flagellin (flg22), a potent elicitor of the defense response to pathogen-associated molecular patterns (PAMPs). Recognizes flg22 from Pseudomonas aeruginosa and Acidovorax avenae. flg22 is a peptide derived from the bacterial flagellin N-terminus sequence. Does not recognize flg22 from Xanthomonas oryzae pv. oryzae (Xoo) or Xanthomonas oryzae pv. oryzicola (Xoc). This Oryza sativa subsp. japonica (Rice) protein is LRR receptor-like serine/threonine-protein kinase FLS2.